The primary structure comprises 109 residues: Large ribosomal subunit protein P1C (109 aa).

The segment covering 68-83 (ASAPTAAGAGAAAPAE) has biased composition (low complexity). The interval 68-109 (ASAPTAAGAGAAAPAEAAEEEKKEEAKEEEESDEDMGFGLFD) is disordered. The span at 94-103 (KEEEESDEDM) shows a compositional bias: acidic residues. S99 carries the phosphoserine modification.

The protein belongs to the eukaryotic ribosomal protein P1/P2 family. As to quaternary structure, component of the large ribosomal subunit (LSU). Mature yeast ribosomes consist of a small (40S) and a large (60S) subunit. The 40S small subunit contains 1 molecule of ribosomal RNA (18S rRNA) and at least 33 different proteins. The large 60S subunit contains 3 rRNA molecules (25S, 5.8S and 5S rRNA) and at least 46 different proteins. The acidic ribosomal P-proteins form the stalk structure of the 60S subunit. They are organized as a pentameric complex in which uL10/P0 interacts with 2 heterodimers of P1 and P2 proteins.

The protein localises to the cytoplasm. Its function is as follows. Component of the ribosome, a large ribonucleoprotein complex responsible for the synthesis of proteins in the cell. The small ribosomal subunit (SSU) binds messenger RNAs (mRNAs) and translates the encoded message by selecting cognate aminoacyl-transfer RNA (tRNA) molecules. The large subunit (LSU) contains the ribosomal catalytic site termed the peptidyl transferase center (PTC), which catalyzes the formation of peptide bonds, thereby polymerizing the amino acids delivered by tRNAs into a polypeptide chain. The nascent polypeptides leave the ribosome through a tunnel in the LSU and interact with protein factors that function in enzymatic processing, targeting, and the membrane insertion of nascent chains at the exit of the ribosomal tunnel. This is Large ribosomal subunit protein P1C (rpp103) from Schizosaccharomyces pombe (strain 972 / ATCC 24843) (Fission yeast).